The chain runs to 225 residues: Ras-related protein Rab-21 (225 aa).

Ala2 carries the post-translational modification N-acetylalanine. 10 residues coordinate GTP: Gly28, Gly31, Lys32, Thr33, Ser34, Asn45, Asp46, His48, Thr50, and Thr51. A Mg(2+)-binding site is contributed by Thr33. Positions 43-56 (KFNDKHITTLQASF) match the Switch 1 motif. The Mg(2+) site is built by Thr51 and Asp74. A Switch 2 motif is present at residues 76–94 (AGQERFHALGPIYYRDSNG). Residues Gly77, Asn132, Lys133, Asp135, Ala163, and Lys164 each coordinate GTP. Residues 188 to 225 (ERAKGNGSSQPGTARRGVQIIDDEPQAQTSGGGCCSSG) form a disordered region. 2 S-geranylgeranyl cysteine lipidation sites follow: Cys221 and Cys222. Cys222 is subject to Cysteine methyl ester. The propeptide at 223-225 (SSG) is removed in mature form.

It belongs to the small GTPase superfamily. Rab family. As to quaternary structure, interacts with the cytoplasmic tail of integrins ITGA1, ITGA2, ITGA5, ITGA6, ITGA11 and ITGB1. Interacts with RABGEF1 (via VPS9 domain). Interacts with ANKRD27. Interacts with VAMP7. Interacts (in GTP-bound form) with VAMP8 in response to starvation; the interaction probably regulates VAMP8 endolysosomal trafficking. Interacts (active GTP-bound form) with TMED10; the interaction is indirect and regulates TMED10 abundance and localization at the Golgi. Requires Mg(2+) as cofactor. In terms of tissue distribution, widely expressed. In jejunal tissue, predominantly expressed in the apical region of the epithelial cell layer of the villi, weak expression, if any, in the crypt epithelium. Capillary endothelium and some cell types in the lamina propria also show expression.

The protein resides in the endoplasmic reticulum membrane. The protein localises to the golgi apparatus. Its subcellular location is the trans-Golgi network. It is found in the golgi apparatus membrane. It localises to the early endosome membrane. The protein resides in the cytoplasmic vesicle membrane. The protein localises to the cleavage furrow. Its subcellular location is the cell projection. It is found in the neuron projection. It carries out the reaction GTP + H2O = GDP + phosphate + H(+). Regulated by guanine nucleotide exchange factors (GEFs) including ANKRD27 and RABGEF1, which promote the exchange of bound GDP for free GTP. Regulated by GTPase activating proteins (GAPs) which increase the GTP hydrolysis activity. Inhibited by GDP dissociation inhibitors (GDIs). Its function is as follows. The small GTPases Rab are key regulators of intracellular membrane trafficking, from the formation of transport vesicles to their fusion with membranes. Rabs cycle between an inactive GDP-bound form and an active GTP-bound form that is able to recruit to membranes different sets of downstream effectors directly responsible for vesicle formation, movement, tethering and fusion. RAB21 is involved in membrane trafficking control. During the mitosis of adherent cells, controls the endosomal trafficking of integrins which is required for the successful completion of cytokinesis. Regulates integrin internalization and recycling, but does not influence the traffic of endosomally translocated receptors in general. As a result, may regulate cell adhesion and migration. Involved in neurite growth. Following SBF2/MTMT13-mediated activation in response to starvation-induced autophagy, binds to and regulates SNARE protein VAMP8 endolysosomal transport required for SNARE-mediated autophagosome-lysosome fusion. Modulates protein levels of the cargo receptors TMED2 and TMED10, and required for appropriate Golgi localization of TMED10. This chain is Ras-related protein Rab-21, found in Homo sapiens (Human).